Here is a 488-residue protein sequence, read N- to C-terminus: Palmitoleoyl-protein carboxylesterase notum1 (488 aa).

Residues 1-20 form the signal peptide; sequence MAGALCVTLLLLLSTNTVSG. A glycan (N-linked (GlcNAc...) asparagine) is linked at asparagine 90. Active-site charge relay system residues include serine 226, aspartate 334, and histidine 383.

Belongs to the pectinacetylesterase family. Notum subfamily. Expressed in the egg and through cleavage to gastrulation stages. Enriched in the animal (prospective ectoderm) and dorsal regions in early gastrula. Shows a dynamic expression during embryogenesis, in particular during neural induction and antero-posterior (AP) patterning.

It localises to the secreted. The catalysed reaction is [Wnt protein]-O-(9Z)-hexadecenoyl-L-serine + H2O = [Wnt protein]-L-serine + (9Z)-hexadecenoate + H(+). Its function is as follows. Carboxylesterase that acts as a key negative regulator of the Wnt signaling pathway by specifically mediating depalmitoleoylation of WNT proteins. Serine palmitoleoylation of WNT proteins is required for efficient binding to frizzled receptors. Functions in the prospective ectoderm and is required for neural induction. In Xenopus laevis (African clawed frog), this protein is Palmitoleoyl-protein carboxylesterase notum1.